The chain runs to 514 residues: Retron Vc95 probable ATPase (514 aa).

The ATP-binding motif lies at 92–99 (GNNGSGKS).

Probable ATPase component of antiviral defense system retron Vc95, composed of a non-coding RNA (ncRNA), a reverse transcriptase (RT), this protein and a putative HNH endonuclease. Expression of retron Vc95 confers protection against bacteriophages T2, T4 and T6. At multiplicity of infection (MOI) of 0.02 cultures slow growth when infected with T4 but do not collapse, at MOI 2 cultures enter growth stasis. This is Retron Vc95 probable ATPase from Vibrio cholerae serotype O1 biovar El Tor.